Here is a 393-residue protein sequence, read N- to C-terminus: Telomeric repeat-binding factor 2-interacting protein 1 (393 aa).

N-acetylalanine is present on Ala2. The region spanning 10-101 is the BRCT domain; it reads DPNGPTHSST…EKLELEAYRL (92 aa). Phosphoserine occurs at positions 36 and 43. The tract at residues 104–132 is disordered; it reads TEQASDPKPGASAEGSTEPEPQPLTGRIA. Lys111 is covalently cross-linked (Glycyl lysine isopeptide (Lys-Gly) (interchain with G-Cter in SUMO2)). Residues 125–185 enclose the Myb-like domain; it reads QPLTGRIAYT…SLKDRYLKHL (61 aa). Ser151 and Ser153 each carry phosphoserine. Lys191 is covalently cross-linked (Glycyl lysine isopeptide (Lys-Gly) (interchain with G-Cter in SUMO2)). Disordered regions lie at residues 194–248 and 272–305; these read LGNA…EADN and HITMCDGDPPTPEEDSETQPDEEEEEPKVSTQEV. Phosphoserine is present on residues Ser200 and Ser203. Glycyl lysine isopeptide (Lys-Gly) (interchain with G-Cter in SUMO2) cross-links involve residues Lys205, Lys209, and Lys237. The span at 223 to 248 shows a compositional bias: basic and acidic residues; the sequence is QNKRTPDLPEEECVKGETKENGEADN. Acidic residues predominate over residues 282-297; sequence TPEEDSETQPDEEEEE. Residue Lys366 forms a Glycyl lysine isopeptide (Lys-Gly) (interchain with G-Cter in SUMO2) linkage. Positions 377–393 match the Nuclear localization signal motif; sequence KKYGAQNVARRIEFRKK.

It belongs to the RAP1 family. Associates with the I-kappa-B-kinase (IKK) core complex, composed of CHUK, IKBKB and IKBKG. Homodimer. Component of the shelterin complex (telosome) composed of TERF1, TERF2, TINF2, TERF2IP ACD and POT1. Interacts with TERF2 (but not TERF1) with its C-terminus. Interacts with SLX4/BTBD12. Interacts with TERF2; the interaction is direct.

The protein localises to the nucleus. It is found in the cytoplasm. Its subcellular location is the chromosome. The protein resides in the telomere. Its function is as follows. Acts both as a regulator of telomere function and as a transcription regulator. Involved in the regulation of telomere length and protection as a component of the shelterin complex (telosome). In contrast to other components of the shelterin complex, it is dispensible for telomere capping and does not participate in the protection of telomeres against non-homologous end-joining (NHEJ)-mediated repair. Instead, it is required to negatively regulate telomere recombination and is essential for repressing homology-directed repair (HDR), which can affect telomere length. Does not bind DNA directly: recruited to telomeric double-stranded 5'-TTAGGG-3' repeats via its interaction with TERF2. Independently of its function in telomeres, also acts as a transcription regulator: recruited to extratelomeric 5'-TTAGGG-3' sites via its association with TERF2 or other factors, and regulates gene expression. When cytoplasmic, associates with the I-kappa-B-kinase (IKK) complex and acts as a regulator of the NF-kappa-B signaling by promoting IKK-mediated phosphorylation of RELA/p65, leading to activate expression of NF-kappa-B target genes. In Rattus norvegicus (Rat), this protein is Telomeric repeat-binding factor 2-interacting protein 1 (Terf2ip).